Consider the following 87-residue polypeptide: RNA-binding protein Hfq (87 aa).

Positions 9 to 68 constitute a Sm domain; sequence DPFLNALRRERIPVSIYLVNGIKLQGQIESFDQFVILLKNTVNQMVYKHAISTVVPARPV. The tract at residues 65-87 is disordered; it reads ARPVSHHSGDRPQGDRPQEKSED. The span at 71 to 87 shows a compositional bias: basic and acidic residues; it reads HSGDRPQGDRPQEKSED.

Belongs to the Hfq family. As to quaternary structure, homohexamer.

RNA chaperone that binds small regulatory RNA (sRNAs) and mRNAs to facilitate mRNA translational regulation in response to envelope stress, environmental stress and changes in metabolite concentrations. Also binds with high specificity to tRNAs. The chain is RNA-binding protein Hfq from Vibrio parahaemolyticus serotype O3:K6 (strain RIMD 2210633).